The following is a 186-amino-acid chain: Translation initiation factor IF-3 (186 aa).

It belongs to the IF-3 family. In terms of assembly, monomer.

The protein resides in the cytoplasm. Functionally, IF-3 binds to the 30S ribosomal subunit and shifts the equilibrium between 70S ribosomes and their 50S and 30S subunits in favor of the free subunits, thus enhancing the availability of 30S subunits on which protein synthesis initiation begins. The polypeptide is Translation initiation factor IF-3 (Borrelia garinii subsp. bavariensis (strain ATCC BAA-2496 / DSM 23469 / PBi) (Borreliella bavariensis)).